The chain runs to 422 residues: uncharacterized protein (422 aa).

It belongs to the asfivirus K421R family.

The protein localises to the virion. This is an uncharacterized protein from Ornithodoros (relapsing fever ticks).